We begin with the raw amino-acid sequence, 445 residues long: Phosphoglucosamine mutase (445 aa).

Residue serine 102 is the Phosphoserine intermediate of the active site. Mg(2+) is bound by residues serine 102, aspartate 241, aspartate 243, and aspartate 245. Residue serine 102 is modified to Phosphoserine.

Belongs to the phosphohexose mutase family. Mg(2+) serves as cofactor. In terms of processing, activated by phosphorylation.

The enzyme catalyses alpha-D-glucosamine 1-phosphate = D-glucosamine 6-phosphate. Its function is as follows. Catalyzes the conversion of glucosamine-6-phosphate to glucosamine-1-phosphate. The protein is Phosphoglucosamine mutase of Zymomonas mobilis subsp. mobilis (strain ATCC 31821 / ZM4 / CP4).